The chain runs to 357 residues: MQTPQIKLDLIEQKYHLQAQKANLKLAKLDSKKLFSFYKKVDKIINPFYFLNSKKSIPFFNSKLLNIEQDPLFFNNISVFVNKHNDGQIIKCCSGVIEPNKITVIFGESGSGKTTLIKQLGLFEKPSFGYINCANYCYFANQYQQKITKNFKQKIGYILQKAEDQFFCDSILEEVLTGAVNLKLCHKKDVNYAKKYLDLCGLENIPLIKNPIELSDGQKKRLALASVLAMQVKFLILDEPTVGLDQMAISNLSKMLVAMKQTTRIVIVSHDVDFIFETADKIIHLHQGKIIHQTTVNDFFSNTSWLMQYGITPPVIIQAVKMFNEKGIAFKNQAEIKNLDDLISELKNLFSCKKPVF.

The ABC transporter domain occupies 72-312; sequence LFFNNISVFV…TSWLMQYGIT (241 aa). 107 to 114 serves as a coordination point for ATP; it reads GESGSGKT.

Belongs to the ABC transporter superfamily.

The polypeptide is Putative ABC transporter ATP-binding protein MG303 (Mycoplasma genitalium (strain ATCC 33530 / DSM 19775 / NCTC 10195 / G37) (Mycoplasmoides genitalium)).